Here is a 310-residue protein sequence, read N- to C-terminus: Ribose-phosphate pyrophosphokinase (310 aa).

ATP contacts are provided by residues 34–36 (DQE) and 93–94 (RQ). Mg(2+)-binding residues include His-127 and Asp-167. Lys-190 is an active-site residue. D-ribose 5-phosphate contacts are provided by residues Arg-192, Asp-216, and 220–224 (DSGGT).

The protein belongs to the ribose-phosphate pyrophosphokinase family. Class I subfamily. Homohexamer. Mg(2+) serves as cofactor.

The protein resides in the cytoplasm. The enzyme catalyses D-ribose 5-phosphate + ATP = 5-phospho-alpha-D-ribose 1-diphosphate + AMP + H(+). The protein operates within metabolic intermediate biosynthesis; 5-phospho-alpha-D-ribose 1-diphosphate biosynthesis; 5-phospho-alpha-D-ribose 1-diphosphate from D-ribose 5-phosphate (route I): step 1/1. Its function is as follows. Involved in the biosynthesis of the central metabolite phospho-alpha-D-ribosyl-1-pyrophosphate (PRPP) via the transfer of pyrophosphoryl group from ATP to 1-hydroxyl of ribose-5-phosphate (Rib-5-P). This Brucella melitensis biotype 1 (strain ATCC 23456 / CCUG 17765 / NCTC 10094 / 16M) protein is Ribose-phosphate pyrophosphokinase.